Here is a 313-residue protein sequence, read N- to C-terminus: Pyrimidine-specific ribonucleoside hydrolase RihB (313 aa).

The active-site Proton acceptor is the Glu-11. The Ca(2+) site is built by Glu-11, Asp-16, and Val-124. The substrate site is built by Gln-227 and His-239. Asp-240 is a binding site for Ca(2+).

This sequence belongs to the IUNH family. RihB subfamily. As to quaternary structure, homotetramer. The cofactor is Ca(2+).

The enzyme catalyses a pyrimidine ribonucleoside + H2O = a pyrimidine nucleobase + D-ribose. Its function is as follows. Hydrolyzes cytidine or uridine to ribose and cytosine or uracil, respectively. Has a clear preference for cytidine over uridine. Strictly specific for ribonucleosides. This chain is Pyrimidine-specific ribonucleoside hydrolase RihB, found in Shigella flexneri serotype 5b (strain 8401).